The primary structure comprises 103 residues: Small ribosomal subunit protein uS10 (103 aa).

It belongs to the universal ribosomal protein uS10 family. Part of the 30S ribosomal subunit.

Involved in the binding of tRNA to the ribosomes. The protein is Small ribosomal subunit protein uS10 of Thioalkalivibrio sulfidiphilus (strain HL-EbGR7).